Consider the following 329-residue polypeptide: Acrosin (329 aa).

The first 17 residues, 1-17 (MLPTAVLLVLAVSVVAR), serve as a signal peptide directing secretion. An N-linked (GlcNAc...) asparagine glycan is attached at Asn19. Intrachain disulfides connect Cys22–Cys152, Cys26–Cys160, Cys71–Cys87, Cys175–Cys244, Cys207–Cys223, and Cys234–Cys264. The region spanning 40–288 (IIGGQDAAHG…YLNWIASKIG (249 aa)) is the Peptidase S1 domain. Residues His86 and Asp140 each act as charge relay system in the active site. The N-linked (GlcNAc...) asparagine glycan is linked to Asn208. Catalysis depends on Ser238, which acts as the Charge relay system.

This sequence belongs to the peptidase S1 family. In terms of assembly, heavy chain (catalytic) and a light chain linked by two disulfide bonds. Forms a heterodimer with SERPINA5.

It carries out the reaction Preferential cleavage: Arg-|-Xaa, Lys-|-Xaa.. Its activity is regulated as follows. Inhibited by SERPINA5. In terms of biological role, acrosin is the major protease of mammalian spermatozoa. It is a serine protease of trypsin-like cleavage specificity, it is synthesized in a zymogen form, proacrosin and stored in the acrosome. This Ovis aries (Sheep) protein is Acrosin (ACR).